The primary structure comprises 480 residues: Vacuolar protein sorting-associated protein 9A (480 aa).

The region spanning 111-255 (VKSDEELFEK…IWNIDGESLS (145 aa)) is the VPS9 domain. GTP contacts are provided by asparagine 189 and aspartate 194. Residues 276–288 (SASSENQDNQNNL) show a composition bias toward polar residues. Disordered regions lie at residues 276-338 (SASS…VQSI) and 418-480 (ESEE…PEHA). Basic and acidic residues predominate over residues 289 to 305 (DVREQKSQTLKASRDSD). Composition is skewed to polar residues over residues 327-338 (ASSNPVERVQSI), 427-437 (NAVNFSEGSSK), and 451-461 (VDNTGTQQTAV).

As to quaternary structure, interacts with RAB5A. Interacts with GPA3 (via C-terminus).

It localises to the cytoplasm. It is found in the golgi apparatus. The protein resides in the trans-Golgi network. Its subcellular location is the prevacuolar compartment. Functionally, functions as a guanine nucleotide exchange factor (GEF) for Rab small GTPases. Activates specifically RAB5A protein. Functions cooperatively with RAB5A to regulate post-Golgi dense vesicle-mediated transport of storage proteins to the type II protein bodies (PBII) protein storage vacuoles in developing endosperm. In Oryza sativa subsp. japonica (Rice), this protein is Vacuolar protein sorting-associated protein 9A.